The chain runs to 436 residues: UDP-N-acetylmuramate--L-alanine ligase (436 aa).

111–117 (GTHGKTS) serves as a coordination point for ATP.

This sequence belongs to the MurCDEF family.

It localises to the cytoplasm. It catalyses the reaction UDP-N-acetyl-alpha-D-muramate + L-alanine + ATP = UDP-N-acetyl-alpha-D-muramoyl-L-alanine + ADP + phosphate + H(+). It participates in cell wall biogenesis; peptidoglycan biosynthesis. Functionally, cell wall formation. This chain is UDP-N-acetylmuramate--L-alanine ligase, found in Lactiplantibacillus plantarum (strain ATCC BAA-793 / NCIMB 8826 / WCFS1) (Lactobacillus plantarum).